A 215-amino-acid chain; its full sequence is MSHVLGFRELGRMDYEPVWHAMQRFTNERGTSAEDEIWLVEHPPVFTQGQAGKAEHLLLPGDIPVVQVDRGGQVTYHGPGQLVAYLLLDVRKLGFGVRDLVSRMEACLIELLASYGVTAAAKPDAPGVYVDGAKIASLGLRIRHGCSFHGLALNVDMDLAPFRRINPCGYAGLAMTQLSDHATPIKFAEVSARLRAQLVKHLDYAEQTTLTGGID.

Residues 31–206 (TSAEDEIWLV…QLVKHLDYAE (176 aa)) form the BPL/LPL catalytic domain. Substrate is bound by residues 70–77 (RGGQVTYH), 137–139 (SLG), and 150–152 (GLA). The active-site Acyl-thioester intermediate is the cysteine 168.

This sequence belongs to the LipB family.

The protein localises to the cytoplasm. It carries out the reaction octanoyl-[ACP] + L-lysyl-[protein] = N(6)-octanoyl-L-lysyl-[protein] + holo-[ACP] + H(+). Its pathway is protein modification; protein lipoylation via endogenous pathway; protein N(6)-(lipoyl)lysine from octanoyl-[acyl-carrier-protein]: step 1/2. Its function is as follows. Catalyzes the transfer of endogenously produced octanoic acid from octanoyl-acyl-carrier-protein onto the lipoyl domains of lipoate-dependent enzymes. Lipoyl-ACP can also act as a substrate although octanoyl-ACP is likely to be the physiological substrate. The chain is Octanoyltransferase from Pseudomonas fluorescens (strain SBW25).